A 201-amino-acid chain; its full sequence is 3-isopropylmalate dehydratase small subunit (201 aa).

It belongs to the LeuD family. LeuD type 1 subfamily. As to quaternary structure, heterodimer of LeuC and LeuD.

It carries out the reaction (2R,3S)-3-isopropylmalate = (2S)-2-isopropylmalate. It participates in amino-acid biosynthesis; L-leucine biosynthesis; L-leucine from 3-methyl-2-oxobutanoate: step 2/4. Its function is as follows. Catalyzes the isomerization between 2-isopropylmalate and 3-isopropylmalate, via the formation of 2-isopropylmaleate. The protein is 3-isopropylmalate dehydratase small subunit of Rhizobium meliloti (strain 1021) (Ensifer meliloti).